The following is a 447-amino-acid chain: Protein O-GlcNAcase (447 aa).

The region spanning 1-277 is the GH84 domain; the sequence is MLTGVIEGFY…TTGAYLADPD (277 aa). The a protein site is built by G8, K39, and D115. D116 serves as the catalytic Proton donor. A protein contacts are provided by residues Y160, 219-221, D226, and N254; that span reads WDN.

This sequence belongs to the glycosyl hydrolase 84 family.

The enzyme catalyses 3-O-(N-acetyl-beta-D-glucosaminyl)-L-seryl-[protein] + H2O = N-acetyl-D-glucosamine + L-seryl-[protein]. It catalyses the reaction 3-O-(N-acetyl-beta-D-glucosaminyl)-L-threonyl-[protein] + H2O = L-threonyl-[protein] + N-acetyl-D-glucosamine. Its activity is regulated as follows. Inhibited by PUGNac (O-(2-acetamido-2-deoxy-D-glucopyranosylidene)amino-N-phenylcarbamate). In terms of biological role, cleaves GlcNAc from O-glycosylated proteins. Can use p-nitrophenyl-beta-GlcNAc and 4-methylumbelliferone-GlcNAc as substrate (in vitro). This chain is Protein O-GlcNAcase, found in Oceanicola granulosus (strain ATCC BAA-861 / DSM 15982 / KCTC 12143 / HTCC2516).